The following is a 463-amino-acid chain: uncharacterized protein (463 aa).

The 69-residue stretch at 13-81 (IPLYQQLYRY…PRSGWFADYH (69 aa)) folds into the HTH gntR-type domain. Positions 41–60 (KRLLANQLSISQTTVERAYE) form a DNA-binding region, H-T-H motif. Lys-308 is modified (N6-(pyridoxal phosphate)lysine).

It in the C-terminal section; belongs to the class-I pyridoxal-phosphate-dependent aminotransferase family. Pyridoxal 5'-phosphate is required as a cofactor.

This is an uncharacterized protein from Bacillus subtilis (strain 168).